The primary structure comprises 583 residues: Protein translocase subunit SecD (583 aa).

The next 6 membrane-spanning stretches (helical) occupy residues 7–27 (FGVV…TLQW), 419–439 (LVWG…EAGV), 446–468 (LLNL…LSSI), 469–489 (AGMI…FERI), 511–531 (FWAI…LSVL), and 538–558 (GFAY…LFVS).

This sequence belongs to the SecD/SecF family. SecD subfamily. Forms a complex with SecF. Part of the essential Sec protein translocation apparatus which comprises SecA, SecYEG and auxiliary proteins SecDF. Other proteins may also be involved.

The protein localises to the cell inner membrane. In terms of biological role, part of the Sec protein translocase complex. Interacts with the SecYEG preprotein conducting channel. SecDF uses the proton motive force (PMF) to complete protein translocation after the ATP-dependent function of SecA. The protein is Protein translocase subunit SecD of Treponema pallidum (strain Nichols).